The primary structure comprises 613 residues: Dihydroxy-acid dehydratase (613 aa).

Position 81 (aspartate 81) interacts with Mg(2+). Cysteine 122 contributes to the [2Fe-2S] cluster binding site. Aspartate 123 and lysine 124 together coordinate Mg(2+). Lysine 124 carries the post-translational modification N6-carboxylysine. Cysteine 193 serves as a coordination point for [2Fe-2S] cluster. Mg(2+) is bound at residue glutamate 489. The active-site Proton acceptor is serine 515.

The protein belongs to the IlvD/Edd family. Homodimer. Requires [2Fe-2S] cluster as cofactor. Mg(2+) is required as a cofactor.

The catalysed reaction is (2R)-2,3-dihydroxy-3-methylbutanoate = 3-methyl-2-oxobutanoate + H2O. It carries out the reaction (2R,3R)-2,3-dihydroxy-3-methylpentanoate = (S)-3-methyl-2-oxopentanoate + H2O. It participates in amino-acid biosynthesis; L-isoleucine biosynthesis; L-isoleucine from 2-oxobutanoate: step 3/4. Its pathway is amino-acid biosynthesis; L-valine biosynthesis; L-valine from pyruvate: step 3/4. Functionally, functions in the biosynthesis of branched-chain amino acids. Catalyzes the dehydration of (2R,3R)-2,3-dihydroxy-3-methylpentanoate (2,3-dihydroxy-3-methylvalerate) into 2-oxo-3-methylpentanoate (2-oxo-3-methylvalerate) and of (2R)-2,3-dihydroxy-3-methylbutanoate (2,3-dihydroxyisovalerate) into 2-oxo-3-methylbutanoate (2-oxoisovalerate), the penultimate precursor to L-isoleucine and L-valine, respectively. In Pseudomonas putida (strain W619), this protein is Dihydroxy-acid dehydratase.